The primary structure comprises 81 residues: Small ribosomal subunit protein bS18 (81 aa).

The protein belongs to the bacterial ribosomal protein bS18 family. In terms of assembly, part of the 30S ribosomal subunit. Forms a tight heterodimer with protein bS6.

Binds as a heterodimer with protein bS6 to the central domain of the 16S rRNA, where it helps stabilize the platform of the 30S subunit. The protein is Small ribosomal subunit protein bS18 of Rubrobacter xylanophilus (strain DSM 9941 / JCM 11954 / NBRC 16129 / PRD-1).